The chain runs to 858 residues: Neural cell adhesion molecule 1 (858 aa).

An N-terminal signal peptide occupies residues 1-19 (MLQTKDLIWTLFFLGTAVS). Ig-like C2-type domains are found at residues 20–111 (LQVD…ATVN), 116–205 (QKLM…KDIQ), 212–301 (PTIQ…ATIH), 308–413 (PKIT…LEVQ), and 416–501 (PKLQ…ESLE). Over 20 to 718 (LQVDIVPSQG…IPANGSPTSG (699 aa)) the chain is Extracellular. 2 disulfide bridges follow: Cys41–Cys96 and Cys139–Cys189. An N-linked (GlcNAc...) asparagine glycan is attached at Asn222. Cys235 and Cys287 are joined by a disulfide. N-linked (GlcNAc...) asparagine glycans are attached at residues Asn315, Asn347, Asn433, Asn459, and Asn488. Cys329 and Cys395 form a disulfide bridge. Cys436 and Cys489 are oxidised to a cystine. Fibronectin type-III domains are found at residues 509–608 (TPSS…TQPV) and 611–706 (EPSA…SAQP). A lipid anchor (GPI-anchor amidated asparagine) is attached at Pro706. The helical transmembrane segment at 719 to 739 (LSTGAIVGILIVIFVLLLVVV) threads the bilayer. At 740–858 (DITCYFLNKC…TQTKENESKA (119 aa)) the chain is on the cytoplasmic side. Ile741 carries the GPI-anchor amidated asparagine lipid modification. A disordered region spans residues 766-858 (GAKGKDMEEG…TQTKENESKA (93 aa)). Basic and acidic residues-rich tracts occupy residues 768 to 809 (KGKD…HTEP) and 817 to 834 (EPEKGPVEAKPECQETET). A phosphoserine mark is found at Ser780 and Ser784.

In terms of assembly, (Microbial infection) Interacts with rabies virus glycoprotein. (Microbial infection) Interacts with Zika virus envelope protein E. As to quaternary structure, interacts with MDK. Found in a complex with SLC39A6, SLC39A10 and with NCAM1; this complex controls NCAM1 phosphorylation and integration into focal adhesion complexes during epithelial-tomesenchymal transition. Interacts with synaptic plasticity regulator PANTS. Polysialylated at Asn-459 and Asn-488 by ST8SIA2 and ST8SIA4. Polysialylation modulates cell interactions by confering both attractive and repulsive properties that are highly regulated by ST8SIA2 and ST8SIA4. Polysialylation is formed on a-2,3-linked sialic acid of core glycans.

Its subcellular location is the cell membrane. The protein resides in the secreted. Functionally, this protein is a cell adhesion molecule involved in neuron-neuron adhesion, neurite fasciculation, outgrowth of neurites, etc. Its function is as follows. (Microbial infection) Acts as a receptor for rabies virus. (Microbial infection) Acts as a receptor for Zika virus. This chain is Neural cell adhesion molecule 1, found in Homo sapiens (Human).